A 134-amino-acid polypeptide reads, in one-letter code: DNA-binding protein inhibitor ID-2 (134 aa).

A phosphoserine mark is found at S14 and S25. The bHLH domain occupies 23 to 75 (SRSKTPVDDPMSLLYNMNDCYSKLKELVPSIPQNKKVSKMEILQHVIDYILDL). Residues 106 to 115 (LNTDISILSL) carry the Nuclear export signal motif.

As to quaternary structure, interacts with GATA4 and NKX2-5. Interacts with NR0B2. Interacts with CLOCK and BMAL1. Interacts with IFI204. Interacts with NEDD9/HEF1. Interacts with ASB4; this interaction promotes ID2 proteasomal degradation. In terms of processing, ubiquitinated in a ASB4-depedent manner, leading to proteasomal degradation. Post-translationally, phosphorylated in vitro by CDK1, PKA and PKC. Highly expressed in early fetal tissues, including those of the central nervous system.

The protein localises to the cytoplasm. It localises to the nucleus. Transcriptional regulator (lacking a basic DNA binding domain) which negatively regulates the basic helix-loop-helix (bHLH) transcription factors by forming heterodimers and inhibiting their DNA binding and transcriptional activity. Implicated in regulating a variety of cellular processes, including cellular growth, senescence, differentiation, apoptosis, angiogenesis, and neoplastic transformation. Inhibits skeletal muscle and cardiac myocyte differentiation. Regulates the circadian clock by repressing the transcriptional activator activity of the CLOCK-BMAL1 heterodimer. Restricts the CLOCK and BMAL1 localization to the cytoplasm. Plays a role in both the input and output pathways of the circadian clock: in the input component, is involved in modulating the magnitude of photic entrainment and in the output component, contributes to the regulation of a variety of liver clock-controlled genes involved in lipid metabolism. In Homo sapiens (Human), this protein is DNA-binding protein inhibitor ID-2 (ID2).